Reading from the N-terminus, the 507-residue chain is Probable cytosol aminopeptidase (507 aa).

Lysine 275 and aspartate 280 together coordinate Mn(2+). Residue lysine 287 is part of the active site. The Mn(2+) site is built by aspartate 298, aspartate 357, and glutamate 359. Arginine 361 is a catalytic residue.

Belongs to the peptidase M17 family. Requires Mn(2+) as cofactor.

It is found in the cytoplasm. The enzyme catalyses Release of an N-terminal amino acid, Xaa-|-Yaa-, in which Xaa is preferably Leu, but may be other amino acids including Pro although not Arg or Lys, and Yaa may be Pro. Amino acid amides and methyl esters are also readily hydrolyzed, but rates on arylamides are exceedingly low.. It catalyses the reaction Release of an N-terminal amino acid, preferentially leucine, but not glutamic or aspartic acids.. Its function is as follows. Presumably involved in the processing and regular turnover of intracellular proteins. Catalyzes the removal of unsubstituted N-terminal amino acids from various peptides. This is Probable cytosol aminopeptidase from Acidobacterium capsulatum (strain ATCC 51196 / DSM 11244 / BCRC 80197 / JCM 7670 / NBRC 15755 / NCIMB 13165 / 161).